We begin with the raw amino-acid sequence, 652 residues long: Acetyl-coenzyme A synthetase (652 aa).

Residues 191 to 194 (RAGR), Thr311, and Asn335 each bind CoA. ATP-binding positions include 387–389 (GEP), 411–416 (DTWWQT), Asp500, and Arg515. Ser523 contacts CoA. Residue Arg526 participates in ATP binding. Val537, His539, and Ile542 together coordinate Mg(2+). Arg584 is a CoA binding site. Lys609 carries the post-translational modification N6-acetyllysine.

This sequence belongs to the ATP-dependent AMP-binding enzyme family. Mg(2+) serves as cofactor. Post-translationally, acetylated. Deacetylation by the SIR2-homolog deacetylase activates the enzyme.

It carries out the reaction acetate + ATP + CoA = acetyl-CoA + AMP + diphosphate. Functionally, catalyzes the conversion of acetate into acetyl-CoA (AcCoA), an essential intermediate at the junction of anabolic and catabolic pathways. Acs undergoes a two-step reaction. In the first half reaction, Acs combines acetate with ATP to form acetyl-adenylate (AcAMP) intermediate. In the second half reaction, it can then transfer the acetyl group from AcAMP to the sulfhydryl group of CoA, forming the product AcCoA. In terms of biological role, enables the cell to use acetate during aerobic growth to generate energy via the TCA cycle, and biosynthetic compounds via the glyoxylate shunt. Acetylates CheY, the response regulator involved in flagellar movement and chemotaxis. The protein is Acetyl-coenzyme A synthetase of Sodalis glossinidius (strain morsitans).